Consider the following 349-residue polypeptide: MTIGIVSYGAYVPRYRIKIEEIARLWGDDAEALKNGLMVYEKSVPDIDEDAATIAVEAARNAMIRSGVDPSRIGAVYTGSESHPYAVKPTSTIVAQAIGATPQMTAADFEFACKAGTAAVQACMGLVGSGMVDLGLAIGADVSQGAPSDALEYTAAAGGVACLIGRNESELAAIIEDTYSFTTDTPDFWRREGMPYPEHGGRFTGEPGYFKHVTNGAKGLLEKLGAKPEDYDYAVFHQPNGKFPSKAAKMLGFTKAQITPGLVVPKIGNTYSGSCLMGIAATLDQAKPGDRIFATAFGSGAGSDAFSITVTDRIEEIRNRAPTVSELIKDPVYIDYARYARHKGKIRLA.

Residues aspartate 29 and alanine 30 each coordinate (3S)-3-hydroxy-3-methylglutaryl-CoA. The active-site Proton donor/acceptor is the glutamate 81. Residues cysteine 113 and threonine 154 each contribute to the (3S)-3-hydroxy-3-methylglutaryl-CoA site. Cysteine 113 (acyl-thioester intermediate) is an active-site residue. Position 202 (arginine 202) interacts with CoA. Threonine 204 and histidine 237 together coordinate (3S)-3-hydroxy-3-methylglutaryl-CoA. Histidine 237 (proton donor/acceptor) is an active-site residue. Lysine 242 contacts CoA. Residues lysine 246, asparagine 269, and serine 299 each coordinate (3S)-3-hydroxy-3-methylglutaryl-CoA.

Belongs to the thiolase-like superfamily. Archaeal HMG-CoA synthase family. Interacts with acetoacetyl-CoA thiolase that catalyzes the precedent step in the pathway and with a DUF35 protein. The acetoacetyl-CoA thiolase/HMG-CoA synthase complex channels the intermediate via a fused CoA-binding site, which allows for efficient coupling of the endergonic thiolase reaction with the exergonic HMGCS reaction.

The catalysed reaction is acetoacetyl-CoA + acetyl-CoA + H2O = (3S)-3-hydroxy-3-methylglutaryl-CoA + CoA + H(+). It participates in metabolic intermediate biosynthesis; (R)-mevalonate biosynthesis; (R)-mevalonate from acetyl-CoA: step 2/3. Functionally, catalyzes the condensation of acetyl-CoA with acetoacetyl-CoA to form 3-hydroxy-3-methylglutaryl-CoA (HMG-CoA). Functions in the mevalonate (MVA) pathway leading to isopentenyl diphosphate (IPP), a key precursor for the biosynthesis of isoprenoid compounds that are building blocks of archaeal membrane lipids. This chain is Hydroxymethylglutaryl-CoA synthase, found in Methanosarcina mazei (strain ATCC BAA-159 / DSM 3647 / Goe1 / Go1 / JCM 11833 / OCM 88) (Methanosarcina frisia).